The primary structure comprises 472 residues: 3-isopropylmalate dehydratase large subunit (472 aa).

3 residues coordinate [4Fe-4S] cluster: Cys-352, Cys-413, and Cys-416.

The protein belongs to the aconitase/IPM isomerase family. LeuC type 1 subfamily. As to quaternary structure, heterodimer of LeuC and LeuD. The cofactor is [4Fe-4S] cluster.

It carries out the reaction (2R,3S)-3-isopropylmalate = (2S)-2-isopropylmalate. It participates in amino-acid biosynthesis; L-leucine biosynthesis; L-leucine from 3-methyl-2-oxobutanoate: step 2/4. In terms of biological role, catalyzes the isomerization between 2-isopropylmalate and 3-isopropylmalate, via the formation of 2-isopropylmaleate. This Pseudomonas fluorescens (strain ATCC BAA-477 / NRRL B-23932 / Pf-5) protein is 3-isopropylmalate dehydratase large subunit.